The following is a 137-amino-acid chain: Large ribosomal subunit protein uL22 (137 aa).

Belongs to the universal ribosomal protein uL22 family. As to quaternary structure, part of the 50S ribosomal subunit.

In terms of biological role, this protein binds specifically to 23S rRNA; its binding is stimulated by other ribosomal proteins, e.g. L4, L17, and L20. It is important during the early stages of 50S assembly. It makes multiple contacts with different domains of the 23S rRNA in the assembled 50S subunit and ribosome. Functionally, the globular domain of the protein is located near the polypeptide exit tunnel on the outside of the subunit, while an extended beta-hairpin is found that lines the wall of the exit tunnel in the center of the 70S ribosome. The polypeptide is Large ribosomal subunit protein uL22 (Flavobacterium johnsoniae (strain ATCC 17061 / DSM 2064 / JCM 8514 / BCRC 14874 / CCUG 350202 / NBRC 14942 / NCIMB 11054 / UW101) (Cytophaga johnsonae)).